We begin with the raw amino-acid sequence, 294 residues long: Urease accessory protein UreD (294 aa).

The interval 1–22 (MSVEKPVAAGRQNSKATGRHKG) is disordered.

The protein belongs to the UreD family. UreD, UreF and UreG form a complex that acts as a GTP-hydrolysis-dependent molecular chaperone, activating the urease apoprotein by helping to assemble the nickel containing metallocenter of UreC. The UreE protein probably delivers the nickel.

Its subcellular location is the cytoplasm. Required for maturation of urease via the functional incorporation of the urease nickel metallocenter. This is Urease accessory protein UreD from Alcanivorax borkumensis (strain ATCC 700651 / DSM 11573 / NCIMB 13689 / SK2).